Consider the following 235-residue polypeptide: NAD(P)H-quinone oxidoreductase subunit K, chloroplastic (235 aa).

Residues Cys-43, Cys-44, Cys-108, and Cys-139 each coordinate [4Fe-4S] cluster.

The protein belongs to the complex I 20 kDa subunit family. In terms of assembly, NDH is composed of at least 16 different subunits, 5 of which are encoded in the nucleus. [4Fe-4S] cluster serves as cofactor.

The protein resides in the plastid. Its subcellular location is the chloroplast thylakoid membrane. The enzyme catalyses a plastoquinone + NADH + (n+1) H(+)(in) = a plastoquinol + NAD(+) + n H(+)(out). It catalyses the reaction a plastoquinone + NADPH + (n+1) H(+)(in) = a plastoquinol + NADP(+) + n H(+)(out). Its function is as follows. NDH shuttles electrons from NAD(P)H:plastoquinone, via FMN and iron-sulfur (Fe-S) centers, to quinones in the photosynthetic chain and possibly in a chloroplast respiratory chain. The immediate electron acceptor for the enzyme in this species is believed to be plastoquinone. Couples the redox reaction to proton translocation, and thus conserves the redox energy in a proton gradient. This is NAD(P)H-quinone oxidoreductase subunit K, chloroplastic from Ipomoea purpurea (Common morning glory).